The primary structure comprises 246 residues: Small ribosomal subunit protein uS2 (246 aa).

This sequence belongs to the universal ribosomal protein uS2 family.

The chain is Small ribosomal subunit protein uS2 from Burkholderia pseudomallei (strain 668).